The chain runs to 476 residues: Glycogen synthase (476 aa).

K15 contributes to the ADP-alpha-D-glucose binding site.

The protein belongs to the glycosyltransferase 1 family. Bacterial/plant glycogen synthase subfamily.

The enzyme catalyses [(1-&gt;4)-alpha-D-glucosyl](n) + ADP-alpha-D-glucose = [(1-&gt;4)-alpha-D-glucosyl](n+1) + ADP + H(+). Its pathway is glycan biosynthesis; glycogen biosynthesis. In terms of biological role, synthesizes alpha-1,4-glucan chains using ADP-glucose. The protein is Glycogen synthase of Bacillus cereus (strain ZK / E33L).